The sequence spans 52 residues: Superoxide dismutase [Cu-Zn] 2 (52 aa).

His44 serves as a coordination point for Cu cation.

The protein belongs to the Cu-Zn superoxide dismutase family. Homodimer. Cu cation is required as a cofactor. Requires Zn(2+) as cofactor.

It is found in the cytoplasm. It carries out the reaction 2 superoxide + 2 H(+) = H2O2 + O2. Its function is as follows. Destroys radicals which are normally produced within the cells and which are toxic to biological systems. The polypeptide is Superoxide dismutase [Cu-Zn] 2 (Debaryomyces hansenii (Yeast)).